The primary structure comprises 389 residues: MVSVSEIRKAQRAEGPATILAIGTANPANRVEQATYPDFYFKITNSEHKVELKEKFQRMCDKSMIKSRYMYLTEEILKENPSVCEYMAPSLDARQDMVVVEVPRLGKEAAVKAIKEWGQPKSKITHLIFCTTSGVDMPGADYQLTKLLGLRPYVKRYMMYQQGCFAGGTVLRLAKDLAENNKGARVLVVCSEVTAVTFRGPSDTHLDSLVGQALFGDGAAALIVGSDPVPEIEKPIFEMVWTAQTIAPDSEGAIDGHLREAGLTFHLLKDVPGIVSKNIDKALVEAFQPLNISDYNSIFWIAHPGGPAILDQVEQKLALKPEKMKATREVLSEYGNMSSACVLFILDEMRKKSAQNGLKTTGEGLEWGVLFGFGPGLTIETVVLHSVAI.

Cys164 is an active-site residue.

This sequence belongs to the thiolase-like superfamily. Chalcone/stilbene synthases family.

The enzyme catalyses (E)-4-coumaroyl-CoA + 3 malonyl-CoA + 3 H(+) = 2',4,4',6'-tetrahydroxychalcone + 3 CO2 + 4 CoA. It participates in secondary metabolite biosynthesis; flavonoid biosynthesis. In terms of biological role, the primary product of this enzyme is 4,2',4',6'-tetrahydroxychalcone (also termed naringenin-chalcone or chalcone) which can under specific conditions spontaneously isomerize into naringenin. This chain is Chalcone synthase 2 (CHS2), found in Trifolium subterraneum (Subterranean clover).